The sequence spans 288 residues: Elongation factor Ts (288 aa).

Positions 79–82 are involved in Mg(2+) ion dislocation from EF-Tu; sequence TDFV.

This sequence belongs to the EF-Ts family.

The protein resides in the cytoplasm. Its function is as follows. Associates with the EF-Tu.GDP complex and induces the exchange of GDP to GTP. It remains bound to the aminoacyl-tRNA.EF-Tu.GTP complex up to the GTP hydrolysis stage on the ribosome. The sequence is that of Elongation factor Ts from Ehrlichia canis (strain Jake).